The primary structure comprises 1271 residues: Breakpoint cluster region protein (1271 aa).

Met1 is modified (N-acetylmethionine). The tract at residues 1–426 is kinase; sequence MVDPVGFAEA…DGEGAFHGDA (426 aa). A coiled-coil region spans residues 28–55; the sequence is VGDIEQELERCKASIRRLEQEVNQERFR. The tract at residues 67–173 is disordered; it reads KKSYDRQRWG…GHGQPGADAE (107 aa). Residues 87 to 105 are compositionally biased toward low complexity; the sequence is ASEPRASASRPQPAPADGA. Ser122 carries the phosphoserine modification. Low complexity predominate over residues 123–138; sequence PGKARPGTARRPGAAA. Residue Ser139 is modified to Phosphoserine. The residue at position 177 (Tyr177) is a Phosphotyrosine; by HCK. The segment covering 185 to 198 has biased composition (basic and acidic residues); that stretch reads ERGLVKVNDKEVSD. 3 disordered regions span residues 185 to 247, 286 to 392, and 416 to 476; these read ERGL…GDYE, GMME…HKRH, and NDGE…SRDA. Positions 197–385 are binding to ABL SH2-domain; that stretch reads SDRISSLGSQ…QSFDSSSPPT (189 aa). The span at 199–208 shows a compositional bias: polar residues; the sequence is RISSLGSQAM. Residues Ser202, Ser215, Ser222, and Ser236 each carry the phosphoserine modification. The residue at position 246 (Tyr246) is a Phosphotyrosine; by FES. Low complexity-rich tracts occupy residues 346-356 and 369-382; these read SSGQSSRVSPS and SPSQ…DSSS. 3 positions are modified to phosphoserine: Ser356, Ser377, and Ser382. Thr385 is subject to Phosphothreonine. Basic and acidic residues predominate over residues 441–451; sequence DRAEEQRRHQD. Ser459 and Ser463 each carry phosphoserine. Arg471 is subject to Omega-N-methylarginine. Ser473 and Ser488 each carry phosphoserine. The DH domain occupies 498 to 691; sequence MRKWVLSGIL…QNFLSSINEE (194 aa). Phosphotyrosine is present on Tyr554. At Thr641 the chain carries Phosphothreonine. The residue at position 644 (Tyr644) is a Phosphotyrosine. At Thr693 the chain carries Phosphothreonine. Residues 708–866 form the PH domain; it reads QLLKDSFMVE…WRENIREQQK (159 aa). One can recognise a C2 domain in the interval 893–1020; it reads HSIPLTINKE…QDRDWQRTVI (128 aa). Position 894 is a phosphoserine (Ser894). Positions 1054–1248 constitute a Rho-GAP domain; it reads VKIAVVTKRE…VMSQVQVLLY (195 aa). Position 1264 is a phosphoserine (Ser1264).

In terms of assembly, homotetramer. Interacts with PDZK1. May interact with CCPG1. Interacts with FES/FPS, ABL1, PIK3R1 and GRB2. Interacts with HCK. Interacts with SH2D5. Interacts with DLG4. Post-translationally, autophosphorylated. Phosphorylated by FES/FPS on tyrosine residues, leading to down-regulation of the BCR kinase activity. Phosphorylation at Tyr-177 by HCK is important for interaction with GRB2.

It is found in the postsynaptic density. The protein resides in the cell projection. It localises to the dendritic spine. The protein localises to the axon. Its subcellular location is the synapse. It catalyses the reaction L-seryl-[protein] + ATP = O-phospho-L-seryl-[protein] + ADP + H(+). The catalysed reaction is L-threonyl-[protein] + ATP = O-phospho-L-threonyl-[protein] + ADP + H(+). Functionally, protein with a unique structure having two opposing regulatory activities toward small GTP-binding proteins. The C-terminus is a GTPase-activating protein (GAP) domain which stimulates GTP hydrolysis by RAC1, RAC2 and CDC42. Accelerates the intrinsic rate of GTP hydrolysis of RAC1 or CDC42, leading to down-regulation of the active GTP-bound form. The central Dbl homology (DH) domain functions as guanine nucleotide exchange factor (GEF) that modulates the GTPases CDC42, RHOA and RAC1. Promotes the conversion of CDC42, RHOA and RAC1 from the GDP-bound to the GTP-bound form. The amino terminus contains an intrinsic kinase activity. Functions as an important negative regulator of neuronal RAC1 activity. Regulates macrophage functions such as CSF1-directed motility and phagocytosis through the modulation of RAC1 activity. Plays a major role as a RHOA GEF in keratinocytes being involved in focal adhesion formation and keratinocyte differentiation. This is Breakpoint cluster region protein from Homo sapiens (Human).